Consider the following 254-residue polypeptide: Alcohol dehydrogenase (254 aa).

N-acetylmethionine is present on Met-1. 10–33 (FVAALGGIGLDTSRELVKRNLKNF) provides a ligand contact to NAD(+). Residue Ser-138 coordinates substrate. Tyr-151 functions as the Proton acceptor in the catalytic mechanism.

This sequence belongs to the short-chain dehydrogenases/reductases (SDR) family. As to quaternary structure, homodimer.

The enzyme catalyses a primary alcohol + NAD(+) = an aldehyde + NADH + H(+). It catalyses the reaction a secondary alcohol + NAD(+) = a ketone + NADH + H(+). The sequence is that of Alcohol dehydrogenase (Adh) from Drosophila lebanonensis (Fruit fly).